Here is a 267-residue protein sequence, read N- to C-terminus: RWD domain-containing protein 3 (267 aa).

Residues 7-114 form the RWD domain; the sequence is QELSALAAIF…LWIQQNLRLV (108 aa). 2 interaction with UBE2I/UBC9 regions span residues 13 to 15 and 100 to 102; these read AAI and VHE.

As to quaternary structure, interacts with UBE2I/UBC9, NFKBIA, HIF1A and NCOA2.

The protein resides in the nucleus. It is found in the cytoplasm. Enhancer of SUMO conjugation. Via its interaction with UBE2I/UBC9, increases SUMO conjugation to proteins by promoting the binding of E1 and E2 enzymes, thioester linkage between SUMO and UBE2I/UBC9 and transfer of SUMO to specific target proteins which include HIF1A, PIAS, NFKBIA, NR3C1 and TOP1. Positively regulates the NF-kappa-B signaling pathway by enhancing the sumoylation of NF-kappa-B inhibitor alpha (NFKBIA), promoting its stabilization which consequently leads to an increased inhibition of NF-kappa-B transcriptional activity. Negatively regulates the hypoxia-inducible factor-1 alpha (HIF1A) signaling pathway by increasing the sumoylation of HIF1A, promoting its stabilization, transcriptional activity and the expression of its target gene VEGFA during hypoxia. Has no effect on ubiquitination. This is RWD domain-containing protein 3 (Rwdd3) from Mus musculus (Mouse).